The sequence spans 442 residues: Protein translocase subunit SecY (442 aa).

The next 10 membrane-spanning stretches (helical) occupy residues phenylalanine 24 to asparagine 44, isoleucine 76 to alanine 96, valine 125 to phenylalanine 145, phenylalanine 149 to leucine 169, valine 178 to isoleucine 198, isoleucine 212 to isoleucine 232, valine 269 to phenylalanine 289, asparagine 312 to phenylalanine 332, glycine 363 to proline 383, and phenylalanine 385 to valine 405.

It belongs to the SecY/SEC61-alpha family. As to quaternary structure, component of the Sec protein translocase complex. Heterotrimer consisting of SecY, SecE and SecG subunits. The heterotrimers can form oligomers, although 1 heterotrimer is thought to be able to translocate proteins. Interacts with the ribosome. Interacts with SecDF, and other proteins may be involved. Interacts with SecA.

Its subcellular location is the cell inner membrane. Its function is as follows. The central subunit of the protein translocation channel SecYEG. Consists of two halves formed by TMs 1-5 and 6-10. These two domains form a lateral gate at the front which open onto the bilayer between TMs 2 and 7, and are clamped together by SecE at the back. The channel is closed by both a pore ring composed of hydrophobic SecY resides and a short helix (helix 2A) on the extracellular side of the membrane which forms a plug. The plug probably moves laterally to allow the channel to open. The ring and the pore may move independently. The polypeptide is Protein translocase subunit SecY (Pseudomonas aeruginosa (strain ATCC 15692 / DSM 22644 / CIP 104116 / JCM 14847 / LMG 12228 / 1C / PRS 101 / PAO1)).